Consider the following 396-residue polypeptide: S-adenosylmethionine synthase (396 aa).

His-15 contacts ATP. Asp-17 contributes to the Mg(2+) binding site. Glu-43 contributes to the K(+) binding site. Positions 56 and 99 each coordinate L-methionine. The interval Gln-99–Thr-109 is flexible loop. Residues Asp-173 to Lys-175, Arg-241 to Phe-242, Asp-250, Arg-256 to Lys-257, Ala-273, and Lys-277 contribute to the ATP site. Asp-250 contributes to the L-methionine binding site. Lys-281 contacts L-methionine.

Belongs to the AdoMet synthase family. Homotetramer; dimer of dimers. It depends on Mg(2+) as a cofactor. The cofactor is K(+).

The protein localises to the cytoplasm. The enzyme catalyses L-methionine + ATP + H2O = S-adenosyl-L-methionine + phosphate + diphosphate. It participates in amino-acid biosynthesis; S-adenosyl-L-methionine biosynthesis; S-adenosyl-L-methionine from L-methionine: step 1/1. Its function is as follows. Catalyzes the formation of S-adenosylmethionine (AdoMet) from methionine and ATP. The overall synthetic reaction is composed of two sequential steps, AdoMet formation and the subsequent tripolyphosphate hydrolysis which occurs prior to release of AdoMet from the enzyme. The protein is S-adenosylmethionine synthase of Nocardioides sp. (strain ATCC BAA-499 / JS614).